The following is a 297-amino-acid chain: Acetylglutamate kinase (297 aa).

Residues 73-74 (GG), Arg-95, and Asn-188 contribute to the substrate site.

It belongs to the acetylglutamate kinase family. ArgB subfamily.

Its subcellular location is the cytoplasm. The catalysed reaction is N-acetyl-L-glutamate + ATP = N-acetyl-L-glutamyl 5-phosphate + ADP. Its pathway is amino-acid biosynthesis; L-arginine biosynthesis; N(2)-acetyl-L-ornithine from L-glutamate: step 2/4. Catalyzes the ATP-dependent phosphorylation of N-acetyl-L-glutamate. The polypeptide is Acetylglutamate kinase (Trichormus variabilis (strain ATCC 29413 / PCC 7937) (Anabaena variabilis)).